The primary structure comprises 289 residues: Nucleotide-binding protein CHY_0272 (289 aa).

Gly8 to Thr15 lines the ATP pocket. Asp59–Gly62 lines the GTP pocket.

The protein belongs to the RapZ-like family.

Displays ATPase and GTPase activities. The chain is Nucleotide-binding protein CHY_0272 from Carboxydothermus hydrogenoformans (strain ATCC BAA-161 / DSM 6008 / Z-2901).